Consider the following 394-residue polypeptide: Elongation factor Tu (394 aa).

One can recognise a tr-type G domain in the interval 10–204 (KPHVNVGTIG…ALDSYIPTPE (195 aa)). A G1 region spans residues 19 to 26 (GHVDHGKT). 19–26 (GHVDHGKT) is a binding site for GTP. A Mg(2+)-binding site is contributed by Thr-26. The interval 60–64 (GITIN) is G2. The G3 stretch occupies residues 81–84 (DCPG). Residues 81–85 (DCPGH) and 136–139 (NKCD) each bind GTP. The interval 136 to 139 (NKCD) is G4. Positions 174–176 (SAL) are G5.

This sequence belongs to the TRAFAC class translation factor GTPase superfamily. Classic translation factor GTPase family. EF-Tu/EF-1A subfamily. In terms of assembly, monomer.

It localises to the cytoplasm. It carries out the reaction GTP + H2O = GDP + phosphate + H(+). Functionally, GTP hydrolase that promotes the GTP-dependent binding of aminoacyl-tRNA to the A-site of ribosomes during protein biosynthesis. In Neisseria meningitidis serogroup A / serotype 4A (strain DSM 15465 / Z2491), this protein is Elongation factor Tu.